We begin with the raw amino-acid sequence, 100 residues long: Nucleoid-associated protein jhp_0031 (100 aa).

Belongs to the YbaB/EbfC family. In terms of assembly, homodimer.

It localises to the cytoplasm. It is found in the nucleoid. Its function is as follows. Binds to DNA and alters its conformation. May be involved in regulation of gene expression, nucleoid organization and DNA protection. The chain is Nucleoid-associated protein jhp_0031 from Helicobacter pylori (strain J99 / ATCC 700824) (Campylobacter pylori J99).